Here is a 434-residue protein sequence, read N- to C-terminus: MDQLQIRGGRALSGDVPISGAKNAALPELCAALLTAEPVTLLNVPRLQDVATMLQLIRNMGVAAEHSQGDDRASSGTVRIDAGALSTPEAPYELVKTMRASVLALGPLLARFGEATVSLPGGCAIGSRPVDQHIKGLSAMGAEIVVEHGYMIARLPEGRSRLQGARITTDMVTVTGTENLLMAATLADGETVLENAAQEPEVVDLAEMLIAMGAQIEGHGTSRIRVQGVERLHGCTHRVVADRIEAGTFLCAVAATGGEALLRHGRADHLDAVIDKLRDAGVTVEAVDGGIRVRSPGAGQLQAQSFRTTEYPGFPTDMQAQFMALNVVAQGTSRVTETIFENRFMHVDELLRLGARIQADGKVAVIEGLGDTGALLSGATVMATDLRASASLVIAGLVATGQTTVDRIYHLDRGYDCMEGKLRALGADIERVKA.

22-23 (KN) serves as a coordination point for phosphoenolpyruvate. A UDP-N-acetyl-alpha-D-glucosamine-binding site is contributed by Arg99. The active-site Proton donor is the Cys123. A 2-(S-cysteinyl)pyruvic acid O-phosphothioketal modification is found at Cys123. Residues 128–132 (RPVDQ), Asp317, and Ile339 contribute to the UDP-N-acetyl-alpha-D-glucosamine site.

Belongs to the EPSP synthase family. MurA subfamily.

It is found in the cytoplasm. The catalysed reaction is phosphoenolpyruvate + UDP-N-acetyl-alpha-D-glucosamine = UDP-N-acetyl-3-O-(1-carboxyvinyl)-alpha-D-glucosamine + phosphate. It participates in cell wall biogenesis; peptidoglycan biosynthesis. In terms of biological role, cell wall formation. Adds enolpyruvyl to UDP-N-acetylglucosamine. This chain is UDP-N-acetylglucosamine 1-carboxyvinyltransferase, found in Paracidovorax citrulli (strain AAC00-1) (Acidovorax citrulli).